The chain runs to 504 residues: Anaerobic nitric oxide reductase transcription regulator NorR (504 aa).

Residue Asp-57 is modified to 4-aspartylphosphate. The Sigma-54 factor interaction domain maps to 187-416; it reads MIGLSPGMTQ…LEHAIHRAVV (230 aa). ATP-binding positions include 215–222 and 278–287; these read GETGTGKE and ADNGTLFLDE. The segment at residues 479–498 is a DNA-binding region (H-T-H motif); that stretch reads WAACARMLETDVANLHRLAK.

It functions in the pathway nitrogen metabolism; nitric oxide reduction. Required for the expression of anaerobic nitric oxide (NO) reductase, acts as a transcriptional activator for at least the norVW operon. Activation also requires sigma-54. The polypeptide is Anaerobic nitric oxide reductase transcription regulator NorR (Escherichia coli (strain ATCC 8739 / DSM 1576 / NBRC 3972 / NCIMB 8545 / WDCM 00012 / Crooks)).